Consider the following 396-residue polypeptide: Elongation factor Tu (396 aa).

The region spanning 10 to 206 (KPHVNVGTIG…ALDTYIPTPE (197 aa)) is the tr-type G domain. Residues 19-26 (GHVDHGKT) are G1. 19–26 (GHVDHGKT) is a binding site for GTP. A Mg(2+)-binding site is contributed by threonine 26. The interval 60 to 64 (GITIN) is G2. The tract at residues 81–84 (DCPG) is G3. Residues 81-85 (DCPGH) and 136-139 (NKCD) each bind GTP. The interval 136-139 (NKCD) is G4. Positions 174 to 176 (SAK) are G5.

This sequence belongs to the TRAFAC class translation factor GTPase superfamily. Classic translation factor GTPase family. EF-Tu/EF-1A subfamily. In terms of assembly, monomer.

The protein resides in the cytoplasm. The catalysed reaction is GTP + H2O = GDP + phosphate + H(+). GTP hydrolase that promotes the GTP-dependent binding of aminoacyl-tRNA to the A-site of ribosomes during protein biosynthesis. The chain is Elongation factor Tu from Burkholderia cenocepacia (strain HI2424).